The sequence spans 455 residues: MIDIKLIRENPDLIKGDLIKRGELEKLRWIDEILELDKKWRENLKEINNLRRERNKLAIEIGKRKKSGEAIDELIKKSDNIAKRIEEIEKENNIIREKIDYYLWRLPNITHESVPIGKDDTENVPIRFWGKARVWEGHLETFLEQSQGKMKYETITWKPELHADLLPKIGGADLERAAKVSGARFFYLLNELVILDLSLIRFALDKLIEKGFIPVIPPYMVRKYVEEGVTSFGDFEDVIYKIEGEDLYLIPTSEHPLAGMHSNEILDGHNLPILYAGVSPCFRKEAGTAGKDTKGIFRVHQFHKVEQFVYARPEESWEWHEKLLQNAEEIFQALEIPYRIVNICTGDLGYAAAKKYDIEAWMSAQGKFREVVSCSNCTEWQARRLNIRFRDKPNEKPRFVHTLNSTAIATSRAIVAIIENFQEEDGTVKIPKALWPYTGFKEILPVDKREKCCQS.

252–254 contacts L-serine; sequence TSE. ATP is bound by residues 283-285 and Val-299; that span reads RKE. Glu-306 contributes to the L-serine binding site. 370–373 is an ATP binding site; the sequence is EVVS. Position 406 (Thr-406) interacts with L-serine.

It belongs to the class-II aminoacyl-tRNA synthetase family. Type-1 seryl-tRNA synthetase subfamily. As to quaternary structure, homodimer. The tRNA molecule binds across the dimer.

It localises to the cytoplasm. The catalysed reaction is tRNA(Ser) + L-serine + ATP = L-seryl-tRNA(Ser) + AMP + diphosphate + H(+). It catalyses the reaction tRNA(Sec) + L-serine + ATP = L-seryl-tRNA(Sec) + AMP + diphosphate + H(+). Its pathway is aminoacyl-tRNA biosynthesis; selenocysteinyl-tRNA(Sec) biosynthesis; L-seryl-tRNA(Sec) from L-serine and tRNA(Sec): step 1/1. Functionally, catalyzes the attachment of serine to tRNA(Ser). Is also able to aminoacylate tRNA(Sec) with serine, to form the misacylated tRNA L-seryl-tRNA(Sec), which will be further converted into selenocysteinyl-tRNA(Sec). The chain is Serine--tRNA ligase from Thermococcus sibiricus (strain DSM 12597 / MM 739).